Here is a 357-residue protein sequence, read N- to C-terminus: Cobalt-precorrin-5B C(1)-methyltransferase (357 aa).

It belongs to the CbiD family.

The catalysed reaction is Co-precorrin-5B + S-adenosyl-L-methionine = Co-precorrin-6A + S-adenosyl-L-homocysteine. The protein operates within cofactor biosynthesis; adenosylcobalamin biosynthesis; cob(II)yrinate a,c-diamide from sirohydrochlorin (anaerobic route): step 6/10. Functionally, catalyzes the methylation of C-1 in cobalt-precorrin-5B to form cobalt-precorrin-6A. The sequence is that of Cobalt-precorrin-5B C(1)-methyltransferase from Gloeobacter violaceus (strain ATCC 29082 / PCC 7421).